Reading from the N-terminus, the 157-residue chain is UPF0225 protein Psyr_3863 (157 aa).

Belongs to the UPF0225 family.

The polypeptide is UPF0225 protein Psyr_3863 (Pseudomonas syringae pv. syringae (strain B728a)).